Consider the following 98-residue polypeptide: Co-chaperonin GroES (98 aa).

This sequence belongs to the GroES chaperonin family. In terms of assembly, heptamer of 7 subunits arranged in a ring. Interacts with the chaperonin GroEL.

It localises to the cytoplasm. In terms of biological role, together with the chaperonin GroEL, plays an essential role in assisting protein folding. The GroEL-GroES system forms a nano-cage that allows encapsulation of the non-native substrate proteins and provides a physical environment optimized to promote and accelerate protein folding. GroES binds to the apical surface of the GroEL ring, thereby capping the opening of the GroEL channel. The chain is Co-chaperonin GroES from Kineococcus radiotolerans (strain ATCC BAA-149 / DSM 14245 / SRS30216).